A 309-amino-acid polypeptide reads, in one-letter code: Peptide methionine sulfoxide reductase MsrA/MsrB (309 aa).

The peptide methionine sulfoxide reductase A stretch occupies residues 1-153 (MIYLAGGCFW…PNGYCHIDIN (153 aa)). The active site involves Cys-8. The region spanning 170 to 293 (ATEIKEKLSA…NSLSITFIPK (124 aa)) is the MsrB domain. Catalysis depends on Cys-282, which acts as the Nucleophile.

The protein in the N-terminal section; belongs to the MsrA Met sulfoxide reductase family. It in the C-terminal section; belongs to the MsrB Met sulfoxide reductase family.

The enzyme catalyses L-methionyl-[protein] + [thioredoxin]-disulfide + H2O = L-methionyl-(S)-S-oxide-[protein] + [thioredoxin]-dithiol. The catalysed reaction is [thioredoxin]-disulfide + L-methionine + H2O = L-methionine (S)-S-oxide + [thioredoxin]-dithiol. It catalyses the reaction L-methionyl-[protein] + [thioredoxin]-disulfide + H2O = L-methionyl-(R)-S-oxide-[protein] + [thioredoxin]-dithiol. Its function is as follows. Has an important function as a repair enzyme for proteins that have been inactivated by oxidation. Catalyzes the reversible oxidation-reduction of methionine sulfoxide in proteins to methionine. This is Peptide methionine sulfoxide reductase MsrA/MsrB (msrAB) from Streptococcus pyogenes serotype M18 (strain MGAS8232).